We begin with the raw amino-acid sequence, 660 residues long: Acetyl-coenzyme A synthetase (660 aa).

Residues 197–200 (RGGK) and T317 contribute to the CoA site. ATP is bound by residues 397–399 (GEP), 421–426 (DTFWQT), D512, and R528. Residue S536 coordinates CoA. ATP is bound at residue R539. 2 residues coordinate Mg(2+): V550 and V555. An N6-acetyllysine modification is found at K625.

It belongs to the ATP-dependent AMP-binding enzyme family. Mg(2+) serves as cofactor. Post-translationally, acetylated. Deacetylation by the SIR2-homolog deacetylase activates the enzyme.

The enzyme catalyses acetate + ATP + CoA = acetyl-CoA + AMP + diphosphate. Its pathway is ketone degradation; acetoin degradation. Catalyzes the conversion of acetate into acetyl-CoA (AcCoA), an essential intermediate at the junction of anabolic and catabolic pathways. AcsA undergoes a two-step reaction. In the first half reaction, AcsA combines acetate with ATP to form acetyl-adenylate (AcAMP) intermediate. In the second half reaction, it can then transfer the acetyl group from AcAMP to the sulfhydryl group of CoA, forming the product AcCoA. Although acetate is the preferred substrate of AcsA, propionate is also used, but at a diminished rate compared with that of acetate. Fatty acids with more than three carbon atoms are usually not accepted as substrates by AcsA. In Cupriavidus necator (strain ATCC 17699 / DSM 428 / KCTC 22496 / NCIMB 10442 / H16 / Stanier 337) (Ralstonia eutropha), this protein is Acetyl-coenzyme A synthetase.